Here is a 27-residue protein sequence, read N- to C-terminus: Larval-specific very high density lipoprotein (27 aa).

In terms of assembly, homodimer. Hemolymph.

The protein localises to the secreted. The protein resides in the extracellular space. Its function is as follows. Unknown (it might play a role in lipid transport and/or storage protein metabolism during metamorphosis). This Apis mellifera (Honeybee) protein is Larval-specific very high density lipoprotein.